Reading from the N-terminus, the 465-residue chain is Sodium-dependent phosphate transport protein 1 (465 aa).

Residues Asn39, Asn47, and Asn56 are each glycosylated (N-linked (GlcNAc...) asparagine). 10 consecutive transmembrane segments (helical) span residues 79-99 (GLIL…VGYL), 117-137 (SLMS…VIVC), 176-196 (FVMG…LLGW), 199-219 (VFYI…FLFF), 260-280 (LPLW…SLLV), 304-324 (LPYL…DFFL), 337-356 (LFTT…LLYL), 363-383 (TVIF…GQLI), 399-419 (VTAL…GLIL), and 429-449 (KIFF…FLFA).

This sequence belongs to the major facilitator superfamily. Sodium/anion cotransporter family. As to quaternary structure, interacts with PDZK1. Kidney.

It is found in the apical cell membrane. It catalyses the reaction 3 Na(+)(out) + phosphate(out) = 3 Na(+)(in) + phosphate(in). The catalysed reaction is urate(out) = urate(in). Its function is as follows. Important for the resorption of phosphate by the kidney. May be involved in actively transporting phosphate into cells via Na(+) cotransport in the renal brush border membrane. Plays a role in urate transport in the kidney. The sequence is that of Sodium-dependent phosphate transport protein 1 (Slc17a1) from Mus musculus (Mouse).